The sequence spans 115 residues: Large ribosomal subunit protein bL19 (115 aa).

Belongs to the bacterial ribosomal protein bL19 family.

Its function is as follows. This protein is located at the 30S-50S ribosomal subunit interface and may play a role in the structure and function of the aminoacyl-tRNA binding site. This is Large ribosomal subunit protein bL19 from Buchnera aphidicola subsp. Acyrthosiphon pisum (strain Tuc7).